A 329-amino-acid polypeptide reads, in one-letter code: Beta-ketoacyl-[acyl-carrier-protein] synthase III (329 aa).

Catalysis depends on residues Cys123 and His256. An ACP-binding region spans residues 257–261 (QANIR). The active site involves Asn286.

This sequence belongs to the thiolase-like superfamily. FabH family. In terms of assembly, homodimer.

It localises to the cytoplasm. The enzyme catalyses malonyl-[ACP] + acetyl-CoA + H(+) = 3-oxobutanoyl-[ACP] + CO2 + CoA. It functions in the pathway lipid metabolism; fatty acid biosynthesis. In terms of biological role, catalyzes the condensation reaction of fatty acid synthesis by the addition to an acyl acceptor of two carbons from malonyl-ACP. Catalyzes the first condensation reaction which initiates fatty acid synthesis and may therefore play a role in governing the total rate of fatty acid production. Possesses both acetoacetyl-ACP synthase and acetyl transacylase activities. Its substrate specificity determines the biosynthesis of branched-chain and/or straight-chain of fatty acids. The chain is Beta-ketoacyl-[acyl-carrier-protein] synthase III from Burkholderia pseudomallei (strain 1710b).